A 666-amino-acid chain; its full sequence is NADH-ubiquinone oxidoreductase chain 5 (666 aa).

17 helical membrane passes run 3–23 (LLIL…GRWL), 31–51 (FSTL…FEIG), 59–78 (IFLV…GFLF), 82–101 (TVTM…IYSI), 119–139 (IFTF…MFLG), 168–190 (LIVN…WVFN), 211–231 (FLGF…IGAI), 251–271 (TPVS…FLMI), 283–303 (ILFI…VTGV), 311–333 (VIAY…SCYD), 337–357 (FHLA…GSVI), 375–395 (FMPL…GFPF), 421–441 (YISF…FYSF), 467–487 (LLMI…GYLI), 524–544 (WLPF…QIFL), 572–594 (VLYN…FKIL), and 629–649 (YLFF…YSYI).

The protein belongs to the complex I subunit 5 family.

The protein resides in the mitochondrion inner membrane. It carries out the reaction a ubiquinone + NADH + 5 H(+)(in) = a ubiquinol + NAD(+) + 4 H(+)(out). In terms of biological role, core subunit of the mitochondrial membrane respiratory chain NADH dehydrogenase (Complex I) that is believed to belong to the minimal assembly required for catalysis. Complex I functions in the transfer of electrons from NADH to the respiratory chain. The immediate electron acceptor for the enzyme is believed to be ubiquinone. The sequence is that of NADH-ubiquinone oxidoreductase chain 5 (ND5) from Chondrus crispus (Carrageen Irish moss).